We begin with the raw amino-acid sequence, 114 residues long: Hydrogenase maturation factor HypA (114 aa).

H2 is a Ni(2+) binding site. Zn(2+) is bound by residues C73, C76, C90, and C93.

The protein belongs to the HypA/HybF family.

Functionally, involved in the maturation of [NiFe] hydrogenases. Required for nickel insertion into the metal center of the hydrogenase. This Chloroflexus aurantiacus (strain ATCC 29366 / DSM 635 / J-10-fl) protein is Hydrogenase maturation factor HypA.